The following is a 662-amino-acid chain: UvrABC system protein B (662 aa).

In terms of domain architecture, Helicase ATP-binding spans 31 to 188; that stretch reads DNIEGGEKAQ…NDLVDIQFER (158 aa). 44–51 serves as a coordination point for ATP; sequence GATGTGKT. Residues 97–120 carry the Beta-hairpin motif; it reads YYDYYQPEAYVPSSDTYIEKDSSV. In terms of domain architecture, Helicase C-terminal spans 435–601; it reads QIDDLLGEIN…TIKKEIRDLI (167 aa). Residues 626–661 form the UVR domain; sequence KELVKKLEKQMQEAVEVLDFELAAQIRDMMLEVKAL.

Belongs to the UvrB family. In terms of assembly, forms a heterotetramer with UvrA during the search for lesions. Interacts with UvrC in an incision complex.

The protein resides in the cytoplasm. The UvrABC repair system catalyzes the recognition and processing of DNA lesions. A damage recognition complex composed of 2 UvrA and 2 UvrB subunits scans DNA for abnormalities. Upon binding of the UvrA(2)B(2) complex to a putative damaged site, the DNA wraps around one UvrB monomer. DNA wrap is dependent on ATP binding by UvrB and probably causes local melting of the DNA helix, facilitating insertion of UvrB beta-hairpin between the DNA strands. Then UvrB probes one DNA strand for the presence of a lesion. If a lesion is found the UvrA subunits dissociate and the UvrB-DNA preincision complex is formed. This complex is subsequently bound by UvrC and the second UvrB is released. If no lesion is found, the DNA wraps around the other UvrB subunit that will check the other stand for damage. In Streptococcus pneumoniae serotype 19F (strain G54), this protein is UvrABC system protein B.